The sequence spans 229 residues: Secretory carrier-associated membrane protein 4 (229 aa).

Over 1 to 39 (MSEKENNFPPLPKFIPVKPCFYQNFSDEIPVEHQVLVKR) the chain is Cytoplasmic. A run of 4 helical transmembrane segments spans residues 40–60 (IYRLWMFYCATLGVNLIACLA), 61–81 (WWIGGGSGTNFGLAFVWLLLF), 105–125 (FMAFFFIFGAQFVLTVIQAIG), and 149–169 (VVMLLPAIMFSVSAAMMAIAI). The Cytoplasmic portion of the chain corresponds to 170-229 (MKVHRIYRGAGGSFQKAQTEWNTGTWRNPPSREAQYNNFSGNSLPEYPTVPSYPGSGQWP). Residue threonine 194 is modified to Phosphothreonine. The tract at residues 208–229 (FSGNSLPEYPTVPSYPGSGQWP) is disordered.

It belongs to the SCAMP family.

Its subcellular location is the membrane. In terms of biological role, probably involved in membrane protein trafficking. In Pongo abelii (Sumatran orangutan), this protein is Secretory carrier-associated membrane protein 4 (SCAMP4).